We begin with the raw amino-acid sequence, 287 residues long: MKSVLVALATATAVSAHGWVDNITISGQFYQVPLHSLDHENLPYQDPYMGEWAPKRISRKIITNGPVEDVTSIDLQCGGSTIEGQIGSEPAPLHAKAVAGSEVSLRWTHWPDSHMGPVLTYMARCPDSGCDKFLPGDEPIWFKIHHEGRHTFDKTWPDDIWATVSIAQHHITSILSFLTLEQTPFMKFDNEPYRYTIPECLKPGFYLVRHEIIALHSAWAAKGAQFYPSCHQLEVSGSGSVVPSASNAELVGFPGAYDAEDPSILFQVWAPGPYNIPGPAVFECPAQ.

Positions 1–16 (MKSVLVALATATAVSA) are cleaved as a signal peptide. His17 contributes to the Cu(2+) binding site. Asn22 carries N-linked (GlcNAc...) asparagine glycosylation. Intrachain disulfides connect Cys77–Cys230 and Cys200–Cys284. His114 provides a ligand contact to Cu(2+). 2 residues coordinate O2: His216 and Gln225. Tyr227 lines the Cu(2+) pocket.

It belongs to the polysaccharide monooxygenase AA9 family. Cu(2+) is required as a cofactor.

It is found in the secreted. It catalyses the reaction [(1-&gt;4)-beta-D-glucosyl]n+m + reduced acceptor + O2 = 4-dehydro-beta-D-glucosyl-[(1-&gt;4)-beta-D-glucosyl]n-1 + [(1-&gt;4)-beta-D-glucosyl]m + acceptor + H2O.. Its function is as follows. Lytic polysaccharide monooxygenase (LPMO) that depolymerizes crystalline and amorphous polysaccharides via the oxidation of scissile alpha- or beta-(1-4)-glycosidic bonds, yielding C1 or C4 oxidation products. Catalysis by LPMOs requires the reduction of the active-site copper from Cu(II) to Cu(I) by a reducing agent and H(2)O(2) or O(2) as a cosubstrate. This chain is AA9 family lytic polysaccharide monooxygenase C, found in Podospora anserina (strain S / ATCC MYA-4624 / DSM 980 / FGSC 10383) (Pleurage anserina).